The following is a 98-amino-acid chain: N(2)-fixation sustaining protein CowN (98 aa).

The protein belongs to the CowN family.

In terms of biological role, is required to sustain N(2)-dependent growth in the presence of low levels of carbon monoxide (CO). Probably acts by protecting the N(2) fixation ability of the nitrogenase complex, which is inactivated in the presence of CO. This is N(2)-fixation sustaining protein CowN from Dechloromonas aromatica (strain RCB).